The primary structure comprises 308 residues: MKVIFAGTPDFAAAALKAVAAAGFEIPLVLTQPDRPKGRGMQLTAPPVKQAALELGLRVAQPEKLRNNAEALQMLKEVEADVMVVAAYGLILPQEVLDTPKHGCLNIHASLLPRWRGAAPIQRAIEAGDAETGVCIMQMDIGLDTGDVVSEHRYAIQPTDTANEVHDALMEIGAAAVVADLQQLQSKGRLNAVKQPEEGVTYAQKLSKEEARIDWSESAAVIERKIRAFNPVPAAWVEYQGKPMKIRRAEVVAQQGAAGEVLSCSADGLVVACGENALKITELQPAGGRRMNIAAFAAGRHIEAGTKL.

(6S)-5,6,7,8-tetrahydrofolate is bound at residue serine 110–proline 113.

Belongs to the Fmt family.

It catalyses the reaction L-methionyl-tRNA(fMet) + (6R)-10-formyltetrahydrofolate = N-formyl-L-methionyl-tRNA(fMet) + (6S)-5,6,7,8-tetrahydrofolate + H(+). Its function is as follows. Attaches a formyl group to the free amino group of methionyl-tRNA(fMet). The formyl group appears to play a dual role in the initiator identity of N-formylmethionyl-tRNA by promoting its recognition by IF2 and preventing the misappropriation of this tRNA by the elongation apparatus. This is Methionyl-tRNA formyltransferase from Neisseria meningitidis serogroup C / serotype 2a (strain ATCC 700532 / DSM 15464 / FAM18).